The following is a 428-amino-acid chain: Sulfite exporter TauE/SafE family protein 6 (428 aa).

Transmembrane regions (helical) follow at residues 1–21, 61–81, 82–102, 105–125, 128–148, 149–169, 245–265, 294–314, 332–352, 356–376, and 388–408; these read MKTL…NANQ, ALVV…ASGI, GDGF…LKAA, FSAF…HFGC, LIDY…VSVG, VICN…VFLM, YWIL…LALS, VMSF…GMII, TSFM…LLGM, EAAY…LVFA, and IIVF…ASFG.

Belongs to the 4-toluene sulfonate uptake permease (TSUP) (TC 2.A.102) family.

Its subcellular location is the membrane. The polypeptide is Sulfite exporter TauE/SafE family protein 6 (Arabidopsis thaliana (Mouse-ear cress)).